The sequence spans 339 residues: RNA 3'-terminal phosphate cyclase (339 aa).

Residues Gln103 and 283–287 contribute to the ATP site; that span reads HLADQ. His308 (tele-AMP-histidine intermediate) is an active-site residue.

It belongs to the RNA 3'-terminal cyclase family. Type 1 subfamily.

It localises to the cytoplasm. The catalysed reaction is a 3'-end 3'-phospho-ribonucleotide-RNA + ATP = a 3'-end 2',3'-cyclophospho-ribonucleotide-RNA + AMP + diphosphate. Functionally, catalyzes the conversion of 3'-phosphate to a 2',3'-cyclic phosphodiester at the end of RNA. The mechanism of action of the enzyme occurs in 3 steps: (A) adenylation of the enzyme by ATP; (B) transfer of adenylate to an RNA-N3'P to produce RNA-N3'PP5'A; (C) and attack of the adjacent 2'-hydroxyl on the 3'-phosphorus in the diester linkage to produce the cyclic end product. The biological role of this enzyme is unknown but it is likely to function in some aspects of cellular RNA processing. The sequence is that of RNA 3'-terminal phosphate cyclase from Salmonella enteritidis PT4 (strain P125109).